The chain runs to 276 residues: Rhomboid protease GlpG (276 aa).

6 helical membrane-spanning segments follow: residues 94–114 (GPVT…MQIL), 142–162 (ALMH…WYLG), 169–189 (LGSG…GYVQ), 192–212 (FSGP…GYVW), 229–249 (LIIF…GMSM), and 250–270 (ANGA…VDSL). Ser-201 acts as the Nucleophile in catalysis. The active site involves His-254.

It belongs to the peptidase S54 family.

Its subcellular location is the cell inner membrane. The enzyme catalyses Cleaves type-1 transmembrane domains using a catalytic dyad composed of serine and histidine that are contributed by different transmembrane domains.. Rhomboid-type serine protease that catalyzes intramembrane proteolysis. The chain is Rhomboid protease GlpG from Shigella boydii serotype 4 (strain Sb227).